We begin with the raw amino-acid sequence, 344 residues long: MGEAIVTDVVIVGAGPAGLFAVFELGLLDIKSHLIDILAKPGGQCAELYPEKPIYDIPGYPRVNGQELVDNLLAQIEPFHPTFHFGEMVERLEVLGTPEAPSFRVHTSGGEIFESKVVIVAAGGGSFQPKKPPIEGIEAFERKSVFYAVRKMEDFRDKHVVIVGGGDSALDWTLNLHPIAKRITLVHRRDDFRAAPHSVNSMRELVAAGHMDLRLGQIVSLRGEAGELSAVVLKGSDGEAEIACERLVPFFGLTMKLGPIADWGLNLHENLIPVDTEKFETNVSGIFAIGDINTYPGKLKLILSGFHEGALAAQKVHRYVYPDKRLSFQYTTSSSSLQKKLGVN.

Residues aspartate 36, glutamine 44, tyrosine 49, valine 89, phenylalanine 127, aspartate 291, and threonine 332 each coordinate FAD.

Belongs to the ferredoxin--NADP reductase type 2 family. In terms of assembly, homodimer. It depends on FAD as a cofactor.

The catalysed reaction is 2 reduced [2Fe-2S]-[ferredoxin] + NADP(+) + H(+) = 2 oxidized [2Fe-2S]-[ferredoxin] + NADPH. In Beijerinckia indica subsp. indica (strain ATCC 9039 / DSM 1715 / NCIMB 8712), this protein is Ferredoxin--NADP reductase.